The chain runs to 975 residues: 26S proteasome non-ATPase regulatory subunit 1 (975 aa).

Residues 272 to 303 form a disordered region; that stretch reads EKKSTTTTTTTPASDSMEIDIDSGNEKSGGSS. 10 PC repeats span residues 393–426, 431–464, 465–499, 500–534, 536–569, 570–605, 606–638, 640–674, 675–715, and 718–748; these read SAISSLGVINKGHIKESKSLLKTYLPGASVNQTP, GSLYALGLIHASHGEEIIDYLVEKLHINNAILHH, GASLGLGLAAMATGRDDLYEDLKSVLYNDDAVSGE, AAGLAMGLVMLGSGAKKAIEEMLAYAHETQHEKTI, SLSMGLAFLMYGKEESADTLIEQMIGDKDPLIRY, GGMYAIAFAYCGTGHNDALRKLLHVAVSDGTDSVRR, AAVTCIGFVLSRQPEKCPKAIALLAESYNPHVR, GAAFALGIACAGTGQRDALEILKSLTTDSVGYVKQ, AAWI…DSMS, and GAVLAFGVIDAGGRNSTIQLHSPSGHKNMNA. Disordered stretches follow at residues 832–882 and 922–975; these read SSRS…KSNP and PEQL…EFTE. Composition is skewed to basic and acidic residues over residues 842–880 and 926–935; these read DVEKKEKEEKEAKEKEAKEKEEKEAAKAEEKEPLFERKS and VVKEKPETKQ. Residues 944-961 are compositionally biased toward low complexity; the sequence is TATATASLPNATTTTSPT.

The protein belongs to the proteasome subunit S1 family.

Functionally, acts as a regulatory subunit of the 26 proteasome which is involved in the ATP-dependent degradation of ubiquitinated proteins. This Dictyostelium discoideum (Social amoeba) protein is 26S proteasome non-ATPase regulatory subunit 1 (psmD1).